The following is a 1085-amino-acid chain: Toxin VasX (1085 aa).

A disordered region spans residues 1–20; that stretch reads MSNPNQAAKTGQTNDAQNPA. The next 4 membrane-spanning stretches (helical) occupy residues 753–773, 813–833, 860–880, and 884–904; these read ALGE…AISA, IALV…ESWG, IIFY…PSIA, and AGWM…GVIL.

The protein localises to the secreted. The protein resides in the host membrane. Its function is as follows. Toxin secreted by the type VI (T6SS) secretion system that acts on prokaryotic target cells. Acts in conjunction with VasW, an accessory protein to VasX, to compromise the inner membrane of prokaryotic target cells. This is Toxin VasX from Vibrio cholerae serotype O1 (strain ATCC 39315 / El Tor Inaba N16961).